Here is a 100-residue protein sequence, read N- to C-terminus: Tetrahydromethanopterin S-methyltransferase subunit B (100 aa).

Residues 80–100 (KLTNIVYGFILGLIILFALLL) traverse the membrane as a helical segment.

It belongs to the MtrB family. In terms of assembly, the complex is composed of 8 subunits; MtrA, MtrB, MtrC, MtrD, MtrE, MtrF, MtrG and MtrH.

The protein localises to the cell membrane. It carries out the reaction 5-methyl-5,6,7,8-tetrahydromethanopterin + coenzyme M + 2 Na(+)(in) = 5,6,7,8-tetrahydromethanopterin + methyl-coenzyme M + 2 Na(+)(out). It functions in the pathway one-carbon metabolism; methanogenesis from CO(2); methyl-coenzyme M from 5,10-methylene-5,6,7,8-tetrahydromethanopterin: step 2/2. In terms of biological role, part of a complex that catalyzes the formation of methyl-coenzyme M and tetrahydromethanopterin from coenzyme M and methyl-tetrahydromethanopterin. This is an energy-conserving, sodium-ion translocating step. The chain is Tetrahydromethanopterin S-methyltransferase subunit B from Methanothermobacter marburgensis (strain ATCC BAA-927 / DSM 2133 / JCM 14651 / NBRC 100331 / OCM 82 / Marburg) (Methanobacterium thermoautotrophicum).